The sequence spans 243 residues: Tetraspanin-36 (243 aa).

The Cytoplasmic segment spans residues 1-9 (MDCGIITSK). The chain crosses the membrane as a helical span at residues 10–30 (TILLLLSLIFWAAGAALAYVG). Residues 31–49 (SYVIKSYNNFEDFMSDRHT) are Lumenal-facing. Residues 50–70 (LIPAAIIIGVAVVMFIIGFVG) form a helical membrane-spanning segment. Residues 71–84 (CCATLRESKVGLGL) are Cytoplasmic-facing. The helical transmembrane segment at 85–105 (FLIIIMLIFAAEVTAFVFGII) threads the bilayer. The Lumenal portion of the chain corresponds to 106-208 (YRGRIRGDLE…QVLQDVLSYA (103 aa)). N-linked (GlcNAc...) asparagine glycans are attached at residues asparagine 149, asparagine 163, and asparagine 174. A helical membrane pass occupies residues 209-229 (MLVILGFAIIKFFGMLSVCVI). Residues 230 to 243 (TCKSKKNEYQPLYA) are Cytoplasmic-facing.

Belongs to the tetraspanin (TM4SF) family. Post-translationally, N-glycosylated. In terms of tissue distribution, strongly expressed in melanophores and xanthophores. Also detected in eye, brain, heart, skin, fin, testis and ovary.

The protein resides in the golgi apparatus membrane. The protein localises to the endoplasmic reticulum membrane. Its function is as follows. Plays a role in migration and segregation of pigment cells (melanophores and xanthophores). Contributes to pigment stripe patterning in the epidermis. The protein is Tetraspanin-36 of Danio rerio (Zebrafish).